Consider the following 545-residue polypeptide: Myotubularin-related protein 9 (545 aa).

An N-acetylmethionine modification is found at Met-1. The region spanning 4 to 99 (AELIKTPRVD…LNIASSIEAL (96 aa)) is the GRAM domain. The region spanning 123-498 (GWHSFLPEQE…QSLQLWEGIF (376 aa)) is the Myotubularin phosphatase domain. Positions 508–542 (LDEAYEEMVNIIEYNKELQAKVNVLRRQLAELETE) form a coiled coil.

Belongs to the protein-tyrosine phosphatase family. Non-receptor class myotubularin subfamily. As to quaternary structure, homodimer. Heterodimer (via C-terminus) with lipid phosphatase MTMR6 (via C-terminus). Heterodimer (via coiled coil domain) with lipid phosphatase MTMR7 (via C-terminus).

It is found in the cytoplasm. The protein localises to the cell projection. It localises to the ruffle membrane. The protein resides in the perinuclear region. Its subcellular location is the endoplasmic reticulum. Its function is as follows. Acts as an adapter for myotubularin-related phosphatases. Increases lipid phosphatase MTMR6 catalytic activity, specifically towards phosphatidylinositol 3,5-bisphosphate, and MTMR6 binding affinity for phosphorylated phosphatidylinositols. Positively regulates lipid phosphatase MTMR7 catalytic activity. The formation of the MTMR6-MTMR9 complex, stabilizes both MTMR6 and MTMR9 protein levels. Plays a role in the late stages of macropinocytosis possibly by regulating MTMR6-mediated dephosphorylation of phosphatidylinositol 3-phosphate in membrane ruffles. Negatively regulates DNA damage-induced apoptosis, in part via its association with MTMR6. Does not bind mono-, di- and tri-phosphorylated phosphatidylinositols, phosphatidic acid and phosphatidylserine. This Mus musculus (Mouse) protein is Myotubularin-related protein 9 (Mtmr9).